Consider the following 461-residue polypeptide: Bifunctional protein GlmU (461 aa).

Residues 1-229 form a pyrophosphorylase region; the sequence is MEKYVVVLAA…FSESLGVNDR (229 aa). UDP-N-acetyl-alpha-D-glucosamine contacts are provided by residues 8–11, Lys22, Gln72, and 77–78; these read LAAG and GT. Asp102 is a Mg(2+) binding site. Residues Gly139, Glu154, Asn169, and Asn227 each coordinate UDP-N-acetyl-alpha-D-glucosamine. Residue Asn227 participates in Mg(2+) binding. Positions 230 to 250 are linker; sequence VALAQATKTMQRRINEAHMRD. Residues 251–461 form an N-acetyltransferase region; that stretch reads GVSFIDPDTA…LPLSKDKDWE (211 aa). Arg332 and Lys350 together coordinate UDP-N-acetyl-alpha-D-glucosamine. The Proton acceptor role is filled by His362. Residues Tyr365 and Asn376 each coordinate UDP-N-acetyl-alpha-D-glucosamine. Acetyl-CoA-binding positions include 385 to 386, Ala422, and Arg439; that span reads NY.

This sequence in the N-terminal section; belongs to the N-acetylglucosamine-1-phosphate uridyltransferase family. It in the C-terminal section; belongs to the transferase hexapeptide repeat family. In terms of assembly, homotrimer. Mg(2+) is required as a cofactor.

The protein localises to the cytoplasm. It catalyses the reaction alpha-D-glucosamine 1-phosphate + acetyl-CoA = N-acetyl-alpha-D-glucosamine 1-phosphate + CoA + H(+). The enzyme catalyses N-acetyl-alpha-D-glucosamine 1-phosphate + UTP + H(+) = UDP-N-acetyl-alpha-D-glucosamine + diphosphate. The protein operates within nucleotide-sugar biosynthesis; UDP-N-acetyl-alpha-D-glucosamine biosynthesis; N-acetyl-alpha-D-glucosamine 1-phosphate from alpha-D-glucosamine 6-phosphate (route II): step 2/2. It participates in nucleotide-sugar biosynthesis; UDP-N-acetyl-alpha-D-glucosamine biosynthesis; UDP-N-acetyl-alpha-D-glucosamine from N-acetyl-alpha-D-glucosamine 1-phosphate: step 1/1. Its pathway is bacterial outer membrane biogenesis; LPS lipid A biosynthesis. Functionally, catalyzes the last two sequential reactions in the de novo biosynthetic pathway for UDP-N-acetylglucosamine (UDP-GlcNAc). The C-terminal domain catalyzes the transfer of acetyl group from acetyl coenzyme A to glucosamine-1-phosphate (GlcN-1-P) to produce N-acetylglucosamine-1-phosphate (GlcNAc-1-P), which is converted into UDP-GlcNAc by the transfer of uridine 5-monophosphate (from uridine 5-triphosphate), a reaction catalyzed by the N-terminal domain. This is Bifunctional protein GlmU from Lactobacillus helveticus (strain DPC 4571).